The chain runs to 704 residues: Eukaryotic translation initiation factor 2-alpha kinase 1 (704 aa).

A Protein kinase domain is found at 224–667; that stretch reads FEELELLGKG…LTSNLFHDLV (444 aa). Residues 230 to 238 and lysine 253 each bind ATP; that span reads LGKGGYGSV. Catalysis depends on aspartate 491, which acts as the Proton acceptor.

This sequence belongs to the protein kinase superfamily. Ser/Thr protein kinase family. GCN2 subfamily. Post-translationally, autophosphorylated.

The enzyme catalyses L-seryl-[protein] + ATP = O-phospho-L-seryl-[protein] + ADP + H(+). It catalyses the reaction L-threonyl-[protein] + ATP = O-phospho-L-threonyl-[protein] + ADP + H(+). Mediates down-regulation of protein synthesis in response to stress conditions by the phosphorylation of the alpha subunit of eIF-2 (tif211) on 'Ser-52'. Protein synthesis is inhibited at the level of initiation. Activity is inhibited in the presence of heme. This chain is Eukaryotic translation initiation factor 2-alpha kinase 1 (hri1), found in Schizosaccharomyces pombe (strain 972 / ATCC 24843) (Fission yeast).